The primary structure comprises 505 residues: Deoxyguanosinetriphosphate triphosphohydrolase (505 aa).

The HD domain maps to 66 to 273 (RLTHSMEVQQ…MEAADDISYC (208 aa)).

It belongs to the dGTPase family. Type 1 subfamily. As to quaternary structure, homotetramer. Requires Mg(2+) as cofactor.

The catalysed reaction is dGTP + H2O = 2'-deoxyguanosine + triphosphate + H(+). Functionally, dGTPase preferentially hydrolyzes dGTP over the other canonical NTPs. This is Deoxyguanosinetriphosphate triphosphohydrolase from Salmonella typhimurium (strain LT2 / SGSC1412 / ATCC 700720).